The sequence spans 694 residues: Polyribonucleotide nucleotidyltransferase (694 aa).

Mg(2+) contacts are provided by Asp485 and Asp491. Residues 552–611 enclose the KH domain; the sequence is PRIETMQIKPNKIATVIGPGGKQIRQIIEEAGVQIDINDSGLVSISASSPQAIEKAKSII. An S1 motif domain is found at 621–689; the sequence is GKIYEGRVTS…EKGQYKLSHK (69 aa).

The protein belongs to the polyribonucleotide nucleotidyltransferase family. Mg(2+) serves as cofactor.

The protein localises to the cytoplasm. The catalysed reaction is RNA(n+1) + phosphate = RNA(n) + a ribonucleoside 5'-diphosphate. Functionally, involved in mRNA degradation. Catalyzes the phosphorolysis of single-stranded polyribonucleotides processively in the 3'- to 5'-direction. The chain is Polyribonucleotide nucleotidyltransferase from Chlamydia abortus (strain DSM 27085 / S26/3) (Chlamydophila abortus).